The following is a 156-amino-acid chain: Succinate dehydrogenase assembly factor 2-B, mitochondrial (156 aa).

A mitochondrion-targeting transit peptide spans 1–24; that stretch reads MLRQLIVSTVGRRMPLQMISQSRL.

This sequence belongs to the SDHAF2 family. Interacts with the flavoprotein subunit within the SDH catalytic dimer.

Its subcellular location is the mitochondrion matrix. Its function is as follows. Plays an essential role in the assembly of succinate dehydrogenase (SDH), an enzyme complex (also referred to as respiratory complex II) that is a component of both the tricarboxylic acid (TCA) cycle and the mitochondrial electron transport chain, and which couples the oxidation of succinate to fumarate with the reduction of ubiquinone (coenzyme Q) to ubiquinol. Required for flavinylation (covalent attachment of FAD) of the flavoprotein subunit of the SDH catalytic dimer. The chain is Succinate dehydrogenase assembly factor 2-B, mitochondrial from Drosophila erecta (Fruit fly).